Here is a 574-residue protein sequence, read N- to C-terminus: Cell division cycle 7-related protein kinase (574 aa).

Serine 27 is subject to Phosphoserine. The Protein kinase domain occupies 58-574 (FKIEDKIGEG…LHPFFKDMSL (517 aa)). Residues 64–72 (IGEGTFSSV) and lysine 90 contribute to the ATP site. Catalysis depends on aspartate 177, which acts as the Proton acceptor. Lysine 268 is covalently cross-linked (Glycyl lysine isopeptide (Lys-Gly) (interchain with G-Cter in SUMO2)). Phosphothreonine is present on threonine 503.

The protein belongs to the protein kinase superfamily. Ser/Thr protein kinase family. CDC7 subfamily. As to quaternary structure, forms a complex with either DBF4/DBF4A or DBF4B, leading to the activation of the kinase activity. Interacts with CLASPIN (via the acidic patch); the interaction is required for phosphorylation of MCM proteins and CLASPIN. The cofactor is Mg(2+).

The protein resides in the nucleus. The enzyme catalyses L-seryl-[protein] + ATP = O-phospho-L-seryl-[protein] + ADP + H(+). It catalyses the reaction L-threonyl-[protein] + ATP = O-phospho-L-threonyl-[protein] + ADP + H(+). Functionally, kinase involved in initiation of DNA replication. Phosphorylates critical substrates that regulate the G1/S phase transition and initiation of DNA replication, such as MCM proteins and CLASPIN. The polypeptide is Cell division cycle 7-related protein kinase (Homo sapiens (Human)).